The chain runs to 202 residues: Translation initiation factor IF-3 (202 aa).

It belongs to the IF-3 family. Monomer.

Its subcellular location is the cytoplasm. In terms of biological role, IF-3 binds to the 30S ribosomal subunit and shifts the equilibrium between 70S ribosomes and their 50S and 30S subunits in favor of the free subunits, thus enhancing the availability of 30S subunits on which protein synthesis initiation begins. This is Translation initiation factor IF-3 from Prochlorococcus marinus (strain MIT 9211).